The following is a 102-amino-acid chain: Small ribosomal subunit protein uS10 (102 aa).

Belongs to the universal ribosomal protein uS10 family. In terms of assembly, part of the 30S ribosomal subunit.

Functionally, involved in the binding of tRNA to the ribosomes. This chain is Small ribosomal subunit protein uS10, found in Methanosarcina mazei (strain ATCC BAA-159 / DSM 3647 / Goe1 / Go1 / JCM 11833 / OCM 88) (Methanosarcina frisia).